The primary structure comprises 311 residues: Pyrimidine-specific ribonucleoside hydrolase RihA (311 aa).

Histidine 240 is a catalytic residue.

This sequence belongs to the IUNH family. RihA subfamily.

Functionally, hydrolyzes with equal efficiency cytidine or uridine to ribose and cytosine or uracil, respectively. The chain is Pyrimidine-specific ribonucleoside hydrolase RihA from Escherichia coli O81 (strain ED1a).